The chain runs to 495 residues: Iroquois-class homeodomain protein irx-4-B (495 aa).

Positions 141 to 203 (GSTRRKNATR…NARRRLKKEN (63 aa)) form a DNA-binding region, homeobox; TALE-type. Positions 203-245 (NKMTWPPRNKCSDEKRPYDEEEEEEEDSQKATIKNEKKTVDEE) are disordered. Basic and acidic residues predominate over residues 235–245 (IKNEKKTVDEE).

This sequence belongs to the TALE/IRO homeobox family.

The protein localises to the nucleus. Acts partially redundantly with other irx members in neural patterning. Required for formation of the posterior forebrain, midbrain, hindbrain, and to a lesser extent, spinal cord. Patterns the neuroectoderm in both the anterior/posterior and dorsal/ventral axes. Does not appear to play a role in pronephros kidney development. The protein is Iroquois-class homeodomain protein irx-4-B (irx4-b) of Xenopus laevis (African clawed frog).